Here is a 244-residue protein sequence, read N- to C-terminus: Monothiol glutaredoxin-4 (244 aa).

Residues 2–106 (SVEITFVEQF…LKAAIDEYIQ (105 aa)) enclose the Thioredoxin domain. The region spanning 147 to 244 (NERLSTLTNA…NGELQEMLPN (98 aa)) is the Glutaredoxin domain. Lys-164 serves as a coordination point for glutathione. Cys-172 lines the [2Fe-2S] cluster pocket. Glutathione-binding positions include 201-205 (RQGLK) and 226-227 (LD).

It belongs to the glutaredoxin family. Monothiol subfamily. In terms of assembly, homodimer. Interacts with php4.

The protein localises to the cytoplasm. It localises to the nucleus. Its function is as follows. Monothiol glutaredoxin involved in the biogenesis of iron-sulfur clusters. Binds one iron-sulfur cluster per dimer. The iron-sulfur cluster is bound between subunits, and is complexed by a bound glutathione and a cysteine residue from each subunit. This is Monothiol glutaredoxin-4 (grx4) from Schizosaccharomyces pombe (strain 972 / ATCC 24843) (Fission yeast).